The primary structure comprises 394 residues: 4-hydroxyphenylpyruvate dioxygenase (394 aa).

2 consecutive VOC domains span residues 27 to 161 (GYDH…LIER) and 193 to 351 (HIDH…LFTK). Fe cation-binding residues include His196, His279, and Glu362.

The protein belongs to the 4HPPD family. Fe cation is required as a cofactor.

The enzyme catalyses 3-(4-hydroxyphenyl)pyruvate + O2 = homogentisate + CO2. It participates in amino-acid degradation; L-phenylalanine degradation; acetoacetate and fumarate from L-phenylalanine: step 3/6. The chain is 4-hydroxyphenylpyruvate dioxygenase from Yarrowia lipolytica (strain CLIB 122 / E 150) (Yeast).